The chain runs to 518 residues: 4-trimethylaminobutyraldehyde dehydrogenase B (518 aa).

NAD(+) is bound by residues Lys204 and 256–260 (GSVPT). Glu278 acts as the Proton acceptor in catalysis. Cys312 (nucleophile) is an active-site residue. Glu415 is a binding site for NAD(+).

This sequence belongs to the aldehyde dehydrogenase family. In terms of assembly, homotetramer.

It localises to the cytoplasm. Its subcellular location is the cytosol. The enzyme catalyses 4-(trimethylamino)butanal + NAD(+) + H2O = 4-(trimethylamino)butanoate + NADH + 2 H(+). It carries out the reaction an aldehyde + NAD(+) + H2O = a carboxylate + NADH + 2 H(+). Its pathway is amine and polyamine biosynthesis; carnitine biosynthesis. Converts gamma-trimethylaminobutyraldehyde into gamma-butyrobetaine with high efficiency (in vitro). Can catalyze the irreversible oxidation of a broad range of aldehydes to the corresponding acids in an NAD-dependent reaction, but with low efficiency. This chain is 4-trimethylaminobutyraldehyde dehydrogenase B (aldh9a1b), found in Danio rerio (Zebrafish).